A 959-amino-acid chain; its full sequence is Protein NLP7 (959 aa).

The disordered stretch occupies residues 1–22 (MCEPDDNSARNGVTTQPSRSRE). Positions 9–18 (ARNGVTTQPS) are enriched in polar residues. The region spanning 578-659 (KKKTEKKRGK…IESVQGTDGG (82 aa)) is the RWP-RK domain. A coiled-coil region spans residues 633–654 (SRKIKKVNRSITKLKRVIESVQ). Composition is skewed to polar residues over residues 673–687 (THGQ…SPNG), 694–703 (PNTNNSPNHW), and 735–745 (GTPTSHGSCDG). Residues 673–760 (THGQTSAQPL…PKVPNQDPLF (88 aa)) are disordered. The PB1 domain occupies 863 to 945 (TVTIKASYKD…KIVRLLVHDV (83 aa)).

As to quaternary structure, interacts with NRG2. As to expression, expressed in roots, stems, leaves, flowers and siliques. Detected in root hairs, emerging secondary roots, vascular tissues, leaf parenchyma cells and stomata.

It is found in the nucleus. In terms of biological role, transcription factor involved in regulation of nitrate assimilation and in transduction of the nitrate signal. In Arabidopsis thaliana (Mouse-ear cress), this protein is Protein NLP7 (NLP7).